Consider the following 133-residue polypeptide: Binder of sperm protein homolog 1 (133 aa).

The first 20 residues, 1-20 (MAQPLDFLLVSICLFHSLFS), serve as a signal peptide directing secretion. 2 consecutive Fibronectin type-II domains span residues 40 to 84 (TEDG…YCAL) and 85 to 133 (SDYA…YCIE). 4 disulfides stabilise this stretch: cysteine 45/cysteine 69, cysteine 59/cysteine 82, cysteine 90/cysteine 116, and cysteine 104/cysteine 131. N-linked (GlcNAc...) asparagine glycosylation occurs at asparagine 72.

This sequence belongs to the seminal plasma protein family. In terms of tissue distribution, expressed only in the epididymis.

It localises to the secreted. Binds sperm in vitro and promotes sperm capacitation. Specifically promotes capacitation induced by high density lipoproteins (HDLs). Also binds heparin, phospholipid liposomes, and weakly to gelatin. Does not bind chondroitin sulfate B. In Mus musculus (Mouse), this protein is Binder of sperm protein homolog 1 (Bsph1).